The following is a 700-amino-acid chain: MPRQLFVTTALPYANGNFHIGHIMEYIQADIWVRYQRMMGNAVHFVCADDCHGAPIMIAAEKVGKTPQQFVADIASGRKPYLDGFHIGFDNWHSTDGAENHELAQAIYRDLKAAGLISTRVIAQFFDTEKNMFLPDRFIKGECPKCGAKDQYGDNCEECGAVYSPTELKNPYSALSGVTPVLRDSEHYFFKLSDPRCVEFLEQWTTDTNPRGQSRLQAEVYNKIKEWLLPDAEGKRDLGDWDISRDAPYFGIEIPDAPGKYFYVWLDAPIGYLAALKNRFIKLAGDATTGAQHYDDFMADPATEQYHFIGKDIITFHTLFWPAMLHFSGRKTPNAVFVHGFLTVNSEKMSKSRGTGLDPLKYLSLGMNPEWLRYYLATKLTARNEDVEFSPEDFMARVNSDLVGKYINIASRAAGFIAKRFGGQLGVISDDGAALLKQIQIERTSIEQLYEAREFAKALRETMLLADRVNEYVDANKPWELAKQTGMETRLHDVCTVCIEAFRALTAYLKPVLPLLAAQVEVFLNIEPLSFASVSQTLGAVHRIGDYKHLMQRVDIKQLEALFEAQAPVEPDNIATESVAPGGEGMAPVISMDDFSKIDLRIAKIVNCETVSGSTKLLRLTLDVGETNTRNVFSGIASSYQPEQLIGKLTVMVANLAPRKMKFGISDGMVLAASHADEKAQPGIYILEPFAGAQPGMRVH.

Residues 12-22 carry the 'HIGH' region motif; it reads PYANGNFHIGH. Zn(2+) is bound by residues C143, C146, C156, and C159. Residues 348–352 carry the 'KMSKS' region motif; that stretch reads KMSKS. ATP is bound at residue K351. The tRNA-binding domain maps to 594 to 700; the sequence is DFSKIDLRIA…AGAQPGMRVH (107 aa).

Belongs to the class-I aminoacyl-tRNA synthetase family. MetG type 1 subfamily. As to quaternary structure, homodimer. Requires Zn(2+) as cofactor.

It is found in the cytoplasm. The catalysed reaction is tRNA(Met) + L-methionine + ATP = L-methionyl-tRNA(Met) + AMP + diphosphate. In terms of biological role, is required not only for elongation of protein synthesis but also for the initiation of all mRNA translation through initiator tRNA(fMet) aminoacylation. The sequence is that of Methionine--tRNA ligase from Albidiferax ferrireducens (strain ATCC BAA-621 / DSM 15236 / T118) (Rhodoferax ferrireducens).